Consider the following 129-residue polypeptide: UPF0325 protein Ent638_0703 (129 aa).

Belongs to the UPF0325 family.

In Enterobacter sp. (strain 638), this protein is UPF0325 protein Ent638_0703.